Consider the following 27-residue polypeptide: uncharacterized protein (27 aa).

Its subcellular location is the plastid. It is found in the chloroplast. This is an uncharacterized protein from Trieres chinensis (Marine centric diatom).